A 137-amino-acid chain; its full sequence is Small ribosomal subunit protein uS11 (137 aa).

The disordered stretch occupies residues 1-30 (MAQAKKGGAPKKGQKTRRREKKNVPHGAAH). The segment covering 8 to 21 (GAPKKGQKTRRREK) has biased composition (basic residues).

Belongs to the universal ribosomal protein uS11 family. In terms of assembly, part of the 30S ribosomal subunit. Interacts with proteins S7 and S18. Binds to IF-3.

Functionally, located on the platform of the 30S subunit, it bridges several disparate RNA helices of the 16S rRNA. Forms part of the Shine-Dalgarno cleft in the 70S ribosome. This Mycolicibacterium vanbaalenii (strain DSM 7251 / JCM 13017 / BCRC 16820 / KCTC 9966 / NRRL B-24157 / PYR-1) (Mycobacterium vanbaalenii) protein is Small ribosomal subunit protein uS11.